The chain runs to 677 residues: Transcription factor IIIB 90 kDa subunit (677 aa).

A TFIIB-type zinc finger spans residues 2-33; that stretch reads TGRVCRGCGGTDIELDAARGDAVCTACGSVLE. Residues cysteine 6, cysteine 9, cysteine 25, and cysteine 28 each coordinate Zn(2+). A run of 2 repeats spans residues 91–172 and 185–269. Disordered regions lie at residues 340-368 and 385-413; these read KGGL…TEDE and LLGG…SLLD. Threonine 365 carries the phosphothreonine modification. Serine 450 carries the phosphoserine modification. Disordered regions lie at residues 501-521 and 544-653; these read YKEH…ASTA and RGLS…EDGE. The residue at position 553 (serine 553) is a Phosphoserine. Over residues 640–653 the composition is skewed to acidic residues; the sequence is EEADEEEPDEEDGE.

It belongs to the TFIIB family. TFIIIB comprises at least the TATA-binding protein (TBP) and the B-related factor 1 (BRF1/TFIIIB90). Interacts with BDP1. Interacts with MAF1.

It localises to the nucleus. Functionally, general activator of RNA polymerase which utilizes different TFIIIB complexes at structurally distinct promoters. The isoform 1 is involved in the transcription of tRNA, adenovirus VA1, 7SL and 5S RNA. Isoform 2 is required for transcription of the U6 promoter. The polypeptide is Transcription factor IIIB 90 kDa subunit (BRF1) (Homo sapiens (Human)).